We begin with the raw amino-acid sequence, 318 residues long: MGVVVYAPASIGNVSVGFDVLGAAVSPVDGTLLGDRVQVKAGTEPFSLNTAGHFVSKLPTDPKENIVYDCWVVFARELDKKGIELKPLEMTLEKNMPIGSGLGSSACSIVAALDALNRFHDQPLNETELLALMGEMEGKISGGIHYDNVAPCYLGGVQLMLEELGIISQEVPCFDEWYWVMAYPGIKVSTAEAREILPSQYRRQDIIAHGRHLAGFIHACHSGQPELAAKMIKDVIAEPYREKLLPGFANARQYAASAGALATGISGSGPTLFSICKQKDVAERVARWLEQNYVQNEEGFVHVCRLDKQGSKVTGSEL.

P97–C107 lines the ATP pocket.

This sequence belongs to the GHMP kinase family. Homoserine kinase subfamily.

Its subcellular location is the cytoplasm. It catalyses the reaction L-homoserine + ATP = O-phospho-L-homoserine + ADP + H(+). The protein operates within amino-acid biosynthesis; L-threonine biosynthesis; L-threonine from L-aspartate: step 4/5. Catalyzes the ATP-dependent phosphorylation of L-homoserine to L-homoserine phosphate. The protein is Homoserine kinase of Vibrio parahaemolyticus serotype O3:K6 (strain RIMD 2210633).